Here is a 348-residue protein sequence, read N- to C-terminus: N-formyl peptide receptor 2 (348 aa).

Residue Asn-1 is glycosylated (N-linked (GlcNAc...) asparagine). Over 1-24 (NFSTPLNEHEEVSYESAGYTVLQI) the chain is Extracellular. Residues 25 to 47 (LPLVVLGVTFVLGVLGNGLVIWV) form a helical membrane-spanning segment. Over 48–58 (AGFRMTRTVTT) the chain is Cytoplasmic. Residues 59 to 80 (ICYLNLPLADFSFTATLPFLIV) form a helical membrane-spanning segment. The Extracellular segment spans residues 81-97 (SMAMGEKWPFGWFLCKL). Cysteines 95 and 173 form a disulfide. A helical membrane pass occupies residues 98–118 (IHIVVDINLFGSVFLIGFIAL). The Cytoplasmic portion of the chain corresponds to 119–137 (DRCICVLHPVWAQNHRTVS). The helical transmembrane segment at 138–159 (LAMKVIIGPWILALVLTLPVFL) threads the bilayer. Topologically, residues 160–202 (FLTTVTIPNGDTYCTFNFASWGGTPEERKNVAITMLTARGIIR) are extracellular. The helical transmembrane segment at 203-223 (FVIGFSMPMSIVAICYGLIAA) threads the bilayer. Topologically, residues 224–239 (KIHKKGMIKSSRPLRV) are cytoplasmic. The chain crosses the membrane as a helical span at residues 240-263 (LTAVVASFFICWFPFQLVALLSTV). Residues 264-283 (WLKEMLFYGKYKIINILVNP) lie on the Extracellular side of the membrane. The chain crosses the membrane as a helical span at residues 284 to 303 (TSSLAFFNSCLNPMLYVFVG). Residues 304–348 (QDFRERLIRSLPTSLERALSEDSAPTNDTAAKCASPPAETELQAM) are Cytoplasmic-facing. Positions 323–348 (SEDSAPTNDTAAKCASPPAETELQAM) are disordered.

The protein belongs to the G-protein coupled receptor 1 family. Interacts with APP; the interaction takes place at the cell surface and the complex is then rapidly internalized.

Its subcellular location is the cell membrane. Its function is as follows. Low affinity receptor for N-formyl-methionyl peptides, which are powerful neutrophil chemotactic factors. Binding of FMLP to the receptor causes activation of neutrophils. This response is mediated via a G-protein that activates a phosphatidylinositol-calcium second messenger system. Receptor for the chemokine-like protein FAM19A5, mediating FAM19A5-stimulated macrophage chemotaxis and the inhibitory effect on TNFSF11/RANKL-induced osteoclast differentiation. In Pongo pygmaeus (Bornean orangutan), this protein is N-formyl peptide receptor 2 (FPR2).